A 467-amino-acid polypeptide reads, in one-letter code: 2-succinylbenzoate--CoA ligase (467 aa).

Belongs to the ATP-dependent AMP-binding enzyme family. MenE subfamily.

The catalysed reaction is 2-succinylbenzoate + ATP + CoA = 2-succinylbenzoyl-CoA + AMP + diphosphate. It functions in the pathway quinol/quinone metabolism; 1,4-dihydroxy-2-naphthoate biosynthesis; 1,4-dihydroxy-2-naphthoate from chorismate: step 5/7. Its pathway is quinol/quinone metabolism; menaquinone biosynthesis. Converts 2-succinylbenzoate (OSB) to 2-succinylbenzoyl-CoA (OSB-CoA). This Listeria monocytogenes serovar 1/2a (strain ATCC BAA-679 / EGD-e) protein is 2-succinylbenzoate--CoA ligase.